Here is a 188-residue protein sequence, read N- to C-terminus: Apolipophorin-3 (188 aa).

Residues 1 to 17 (MVAKLFVLVACIALSHA) form the signal peptide. The propeptide occupies 18–22 (AMVRR).

The protein belongs to the insect apolipophorin-3 family. In terms of assembly, equilibrium between a soluble monomer and a bound lipoprotein form. Apolipophorin-3 associates with lipophorin during lipid loading until each particle contains 9 or 14 molecules of apolipophorin-3. Expressed in fat body and secreted in hemolymph. Also expressed in ovary and testis at lower levels.

The protein localises to the secreted. In terms of biological role, assists in the loading of diacylglycerol, generated from triacylglycerol stores in the fat body through the action of adipokinetic hormone, into lipophorin, the hemolymph lipoprotein. It increases the lipid carrying capacity of lipophorin by covering the expanding hydrophobic surface resulting from diacylglycerol uptake. It thus plays a critical role in the transport of lipids during flight in several species of insects. The polypeptide is Apolipophorin-3 (Spodoptera litura (Asian cotton leafworm)).